The chain runs to 92 residues: Cell division protein FtsB (92 aa).

Residues 1 to 3 lie on the Cytoplasmic side of the membrane; it reads MRL. The helical transmembrane segment at 4 to 21 threads the bilayer; sequence FIFLLVAVLLLFQYDFWF. Over 22-92 the chain is Periplasmic; it reads GKNGYLDYKR…IFYHIVKEQK (71 aa). Positions 26–74 form a coiled coil; sequence YLDYKRTAQQIAQHKQENEKLSQRNQVVAAEIKDLKQGVEAIEERARFQ.

It belongs to the FtsB family. In terms of assembly, part of a complex composed of FtsB, FtsL and FtsQ.

The protein resides in the cell inner membrane. Its function is as follows. Essential cell division protein. May link together the upstream cell division proteins, which are predominantly cytoplasmic, with the downstream cell division proteins, which are predominantly periplasmic. This Pasteurella multocida (strain Pm70) protein is Cell division protein FtsB.